Here is a 420-residue protein sequence, read N- to C-terminus: uncharacterized protein (420 aa).

The VWFA domain maps to 43 to 215; sequence NLCLVLDHSG…HTFRQLFQRM (173 aa). The tract at residues 389-420 is disordered; that stretch reads LQSGEDLSEGDRKKTRMVSKTTLQPPSAPSEH.

This is an uncharacterized protein from Synechocystis sp. (strain ATCC 27184 / PCC 6803 / Kazusa).